We begin with the raw amino-acid sequence, 386 residues long: Succinate--CoA ligase [ADP-forming] subunit beta (386 aa).

In terms of domain architecture, ATP-grasp spans 9 to 244; it reads KEVLRKYGVV…LDEEDADEIE (236 aa). Residues lysine 46, 53–55, glutamate 99, alanine 102, and glutamate 107 each bind ATP; that span reads GRG. Mg(2+)-binding residues include asparagine 199 and aspartate 213. Residues asparagine 264 and 321–323 contribute to the substrate site; that span reads GIM.

It belongs to the succinate/malate CoA ligase beta subunit family. As to quaternary structure, heterotetramer of two alpha and two beta subunits. Requires Mg(2+) as cofactor.

The catalysed reaction is succinate + ATP + CoA = succinyl-CoA + ADP + phosphate. The enzyme catalyses GTP + succinate + CoA = succinyl-CoA + GDP + phosphate. Its pathway is carbohydrate metabolism; tricarboxylic acid cycle; succinate from succinyl-CoA (ligase route): step 1/1. Functionally, succinyl-CoA synthetase functions in the citric acid cycle (TCA), coupling the hydrolysis of succinyl-CoA to the synthesis of either ATP or GTP and thus represents the only step of substrate-level phosphorylation in the TCA. The beta subunit provides nucleotide specificity of the enzyme and binds the substrate succinate, while the binding sites for coenzyme A and phosphate are found in the alpha subunit. The chain is Succinate--CoA ligase [ADP-forming] subunit beta from Azoarcus sp. (strain BH72).